A 303-amino-acid chain; its full sequence is Siderophore enterobactin esterase (303 aa).

The protein belongs to the esterase D family. Homodimer.

It carries out the reaction enterobactin + 3 H2O = 3 N-(2,3-dihydroxybenzoyl)-L-serine + 2 H(+). Displays specific enterobactin (ENB) esterase activity required for intracellular release of iron. Enterobactin is a xenosiderophore that is selectively produced by Gram-negative Enterobacteriaceae. The affinity for enterobactin is quite high, potentially due to the low natural abundance of this xenosiderophore in fungal habitats. Does not hydrolyze triacetylfusarinine C (TAFC). This is Siderophore enterobactin esterase from Emericella nidulans (strain FGSC A4 / ATCC 38163 / CBS 112.46 / NRRL 194 / M139) (Aspergillus nidulans).